Here is a 129-residue protein sequence, read N- to C-terminus: MGTSNTQKPQKQVPKRKKYKNLFSLKTKKKRGKKFSKRKKGGTLTLPVIPPKSIFILLKSRNKKIYDRKIIDYKNRSLLQEYIYFTGKIIPKRKTGITTKQQRYLTKAIKTARILGLLPFVKKEKGFFR.

Positions 1-20 (MGTSNTQKPQKQVPKRKKYK) are disordered.

Belongs to the bacterial ribosomal protein bS18 family. In terms of assembly, part of the 30S ribosomal subunit.

The protein localises to the plastid. It localises to the chloroplast. The chain is Small ribosomal subunit protein bS18c from Stigeoclonium helveticum (Green alga).